We begin with the raw amino-acid sequence, 457 residues long: L-lysine-epsilon aminotransferase (457 aa).

Pyridoxal 5'-phosphate contacts are provided by Gly-131 and Ala-132. Positions 172 and 278 each coordinate 2-oxoglutarate. Residue Arg-172 coordinates L-lysine. Residue Gln-278 coordinates pyridoxal 5'-phosphate. Lys-304 carries the N6-(pyridoxal phosphate)lysine modification. Arg-427 serves as a coordination point for 2-oxoglutarate.

This sequence belongs to the class-III pyridoxal-phosphate-dependent aminotransferase family. In terms of assembly, monomer. The cofactor is pyridoxal 5'-phosphate.

The enzyme catalyses L-lysine + 2-oxoglutarate = (S)-2-amino-6-oxohexanoate + L-glutamate. The protein operates within antibiotic biosynthesis; cephamycin C biosynthesis. Activity is induced in the presence of high concentrations of lysine, but not by L-alpha-aminoadipic acid. Not repressed by ammonium ions. In terms of biological role, catalyzes the transfer of the terminal amino group of L-lysine to alpha-ketoglutarate to yield L-glutamate and 2-aminoadipate 6-semialdehyde ((S)-2-amino-6-oxohexanoate), which is spontaneously converted to the dehydrated form 1-piperideine 6-carboxylate. Shows a high specificity for L-lysine as substrate although L-ornithine can also be used, leading to the formation of an o-aminobenzaldehyde reactive compound. Only cis-oxaloacetate and pyruvate can replace alpha-ketoglutarate, but with very low efficiency. The protein is L-lysine-epsilon aminotransferase of Streptomyces clavuligerus.